We begin with the raw amino-acid sequence, 461 residues long: Argininosuccinate lyase (461 aa).

It belongs to the lyase 1 family. Argininosuccinate lyase subfamily.

The protein resides in the cytoplasm. It carries out the reaction 2-(N(omega)-L-arginino)succinate = fumarate + L-arginine. It participates in amino-acid biosynthesis; L-arginine biosynthesis; L-arginine from L-ornithine and carbamoyl phosphate: step 3/3. In Trichormus variabilis (strain ATCC 29413 / PCC 7937) (Anabaena variabilis), this protein is Argininosuccinate lyase.